We begin with the raw amino-acid sequence, 299 residues long: Putative beta-glucosidase 2 (299 aa).

Positions 1 to 16 (MLHCITTIFLSISRMT) are cleaved as a signal peptide. 49-50 (NE) lines the a beta-D-glucoside pocket. Residue E50 is the Proton donor of the active site. C69 and C72 are joined by a disulfide. Residues N71 and N76 are each glycosylated (N-linked (GlcNAc...) asparagine). Residue Y189 participates in a beta-D-glucoside binding. An N-linked (GlcNAc...) asparagine glycan is attached at N222. E255 contributes to the a beta-D-glucoside binding site. The Nucleophile role is filled by E255. N-linked (GlcNAc...) asparagine glycosylation occurs at N290.

Belongs to the glycosyl hydrolase 1 family.

It carries out the reaction Hydrolysis of terminal, non-reducing beta-D-glucosyl residues with release of beta-D-glucose.. In Arabidopsis thaliana (Mouse-ear cress), this protein is Putative beta-glucosidase 2.